A 138-amino-acid chain; its full sequence is Nucleoside diphosphate kinase (138 aa).

The ATP site is built by Lys9, Phe57, Arg85, Thr91, Arg102, and Asn112. His115 functions as the Pros-phosphohistidine intermediate in the catalytic mechanism.

It belongs to the NDK family. Requires Mg(2+) as cofactor.

The protein resides in the cytoplasm. It carries out the reaction a 2'-deoxyribonucleoside 5'-diphosphate + ATP = a 2'-deoxyribonucleoside 5'-triphosphate + ADP. It catalyses the reaction a ribonucleoside 5'-diphosphate + ATP = a ribonucleoside 5'-triphosphate + ADP. Its function is as follows. Major role in the synthesis of nucleoside triphosphates other than ATP. The ATP gamma phosphate is transferred to the NDP beta phosphate via a ping-pong mechanism, using a phosphorylated active-site intermediate. In Picrophilus torridus (strain ATCC 700027 / DSM 9790 / JCM 10055 / NBRC 100828 / KAW 2/3), this protein is Nucleoside diphosphate kinase.